A 50-amino-acid polypeptide reads, in one-letter code: Large ribosomal subunit protein bL33B (50 aa).

Belongs to the bacterial ribosomal protein bL33 family.

In Enterococcus faecalis (strain ATCC 700802 / V583), this protein is Large ribosomal subunit protein bL33B (rpmG2).